A 72-amino-acid polypeptide reads, in one-letter code: Small ribosomal subunit protein eS31 (72 aa).

Residues Cys-32, Cys-35, Cys-51, and Cys-54 each coordinate Zn(2+). Residues 32 to 54 form a C4-type zinc finger; it reads CPRCGSVMAYHKEPVPRWHCGKC.

Belongs to the eukaryotic ribosomal protein eS31 family. As to quaternary structure, part of the 30S ribosomal subunit. Requires Zn(2+) as cofactor.

The chain is Small ribosomal subunit protein eS31 from Caldivirga maquilingensis (strain ATCC 700844 / DSM 13496 / JCM 10307 / IC-167).